We begin with the raw amino-acid sequence, 248 residues long: DNA repair protein RecO (248 aa).

Belongs to the RecO family.

In terms of biological role, involved in DNA repair and RecF pathway recombination. The polypeptide is DNA repair protein RecO (Thermoanaerobacter sp. (strain X514)).